A 413-amino-acid chain; its full sequence is Exodeoxyribonuclease 7 large subunit (413 aa).

This sequence belongs to the XseA family. In terms of assembly, heterooligomer composed of large and small subunits.

It is found in the cytoplasm. The enzyme catalyses Exonucleolytic cleavage in either 5'- to 3'- or 3'- to 5'-direction to yield nucleoside 5'-phosphates.. Its function is as follows. Bidirectionally degrades single-stranded DNA into large acid-insoluble oligonucleotides, which are then degraded further into small acid-soluble oligonucleotides. This Corynebacterium efficiens (strain DSM 44549 / YS-314 / AJ 12310 / JCM 11189 / NBRC 100395) protein is Exodeoxyribonuclease 7 large subunit.